The sequence spans 150 residues: Cytochrome c oxidase subunit 5A, mitochondrial (150 aa).

The transit peptide at 1-41 (MLGAALRRCAVAATARAGPRGLLHSAPTPGPAAAIQSVRCY) directs the protein to the mitochondrion. The short motif at 2-17 (LGAALRRCAVAATARA) is the SIFI-degron element. Lysine 87 and lysine 113 each carry N6-acetyllysine. Phosphothreonine is present on threonine 141.

Belongs to the cytochrome c oxidase subunit 5A family. Component of the cytochrome c oxidase (complex IV, CIV), a multisubunit enzyme composed of 14 subunits. The complex is composed of a catalytic core of 3 subunits MT-CO1, MT-CO2 and MT-CO3, encoded in the mitochondrial DNA, and 11 supernumerary subunits COX4I, COX5A, COX5B, COX6A, COX6B, COX6C, COX7A, COX7B, COX7C, COX8 and NDUFA4, which are encoded in the nuclear genome. The complex exists as a monomer or a dimer and forms supercomplexes (SCs) in the inner mitochondrial membrane with NADH-ubiquinone oxidoreductase (complex I, CI) and ubiquinol-cytochrome c oxidoreductase (cytochrome b-c1 complex, complex III, CIII), resulting in different assemblies (supercomplex SCI(1)III(2)IV(1) and megacomplex MCI(2)III(2)IV(2)). Interacts with AFG1L. Interacts with RAB5IF. Post-translationally, in response to mitochondrial stress, the precursor protein is ubiquitinated by the SIFI complex in the cytoplasm before mitochondrial import, leading to its degradation. Within the SIFI complex, UBR4 initiates ubiquitin chain that are further elongated or branched by KCMF1.

The protein localises to the mitochondrion inner membrane. It participates in energy metabolism; oxidative phosphorylation. In terms of biological role, component of the cytochrome c oxidase, the last enzyme in the mitochondrial electron transport chain which drives oxidative phosphorylation. The respiratory chain contains 3 multisubunit complexes succinate dehydrogenase (complex II, CII), ubiquinol-cytochrome c oxidoreductase (cytochrome b-c1 complex, complex III, CIII) and cytochrome c oxidase (complex IV, CIV), that cooperate to transfer electrons derived from NADH and succinate to molecular oxygen, creating an electrochemical gradient over the inner membrane that drives transmembrane transport and the ATP synthase. Cytochrome c oxidase is the component of the respiratory chain that catalyzes the reduction of oxygen to water. Electrons originating from reduced cytochrome c in the intermembrane space (IMS) are transferred via the dinuclear copper A center (CU(A)) of subunit 2 and heme A of subunit 1 to the active site in subunit 1, a binuclear center (BNC) formed by heme A3 and copper B (CU(B)). The BNC reduces molecular oxygen to 2 water molecules using 4 electrons from cytochrome c in the IMS and 4 protons from the mitochondrial matrix. In Cebuella pygmaea (Pygmy marmoset), this protein is Cytochrome c oxidase subunit 5A, mitochondrial (COX5A).